Here is a 110-residue protein sequence, read N- to C-terminus: UPF0122 protein SPG_1182 (110 aa).

Belongs to the UPF0122 family.

Might take part in the signal recognition particle (SRP) pathway. This is inferred from the conservation of its genetic proximity to ftsY/ffh. May be a regulatory protein. This is UPF0122 protein SPG_1182 from Streptococcus pneumoniae serotype 19F (strain G54).